We begin with the raw amino-acid sequence, 106 residues long: Large ribosomal subunit protein uL24 (106 aa).

This sequence belongs to the universal ribosomal protein uL24 family. As to quaternary structure, part of the 50S ribosomal subunit.

One of two assembly initiator proteins, it binds directly to the 5'-end of the 23S rRNA, where it nucleates assembly of the 50S subunit. Functionally, one of the proteins that surrounds the polypeptide exit tunnel on the outside of the subunit. The polypeptide is Large ribosomal subunit protein uL24 (Laribacter hongkongensis (strain HLHK9)).